The sequence spans 118 residues: Peptidyl-tRNA hydrolase (118 aa).

This sequence belongs to the PTH2 family.

Its subcellular location is the cytoplasm. The catalysed reaction is an N-acyl-L-alpha-aminoacyl-tRNA + H2O = an N-acyl-L-amino acid + a tRNA + H(+). Its function is as follows. The natural substrate for this enzyme may be peptidyl-tRNAs which drop off the ribosome during protein synthesis. This is Peptidyl-tRNA hydrolase from Thermococcus onnurineus (strain NA1).